Here is a 500-residue protein sequence, read N- to C-terminus: Protein DETOXIFICATION 24 (500 aa).

Positions 1–20 (MSTQEEMEERLLREGSDAEG) are disordered. The next 12 helical transmembrane spans lie at 48-67 (SSLF…AFIG), 72-92 (LGLA…YGLM), 124-144 (IVDM…GPIL), 160-180 (IYPW…IQMY), 188-208 (AIVG…TWWC), 225-245 (VGSW…WCPF), 266-286 (ISSG…VLMA), 298-318 (AFSI…GFLG), 342-362 (VILT…LAFC), 384-404 (VILA…GVAV), 411-431 (IVAV…GLIL), and 441-461 (GLWS…CYII).

This sequence belongs to the multi antimicrobial extrusion (MATE) (TC 2.A.66.1) family.

The protein resides in the membrane. The sequence is that of Protein DETOXIFICATION 24 from Arabidopsis thaliana (Mouse-ear cress).